The following is a 117-amino-acid chain: Large ribosomal subunit protein uL24 (117 aa).

Residues 1-10 are compositionally biased toward basic residues; the sequence is MSKQPRKQRK. Residues 1–28 are disordered; the sequence is MSKQPRKQRKALYTAPLHKRHNSMSVHL.

This sequence belongs to the universal ribosomal protein uL24 family. Part of the 50S ribosomal subunit.

One of two assembly initiator proteins, it binds directly to the 5'-end of the 23S rRNA, where it nucleates assembly of the 50S subunit. Functionally, located at the polypeptide exit tunnel on the outside of the subunit. The sequence is that of Large ribosomal subunit protein uL24 from Methanosphaera stadtmanae (strain ATCC 43021 / DSM 3091 / JCM 11832 / MCB-3).